Consider the following 72-residue polypeptide: Protein SlyX homolog (72 aa).

The segment at 53–72 is disordered; that stretch reads KDISPSNIRREEEETPPPHY.

The protein belongs to the SlyX family.

This chain is Protein SlyX homolog, found in Marinobacter nauticus (strain ATCC 700491 / DSM 11845 / VT8) (Marinobacter aquaeolei).